Consider the following 358-residue polypeptide: 3-isopropylmalate dehydrogenase (358 aa).

Residue 77 to 90 participates in NAD(+) binding; it reads GEKWDSLPRELRPE. Arg97, Arg107, Arg135, and Asp220 together coordinate substrate. Mg(2+) contacts are provided by Asp220, Asp244, and Asp248. 277–289 is an NAD(+) binding site; that stretch reads GSAPDIAGQGIAN.

It belongs to the isocitrate and isopropylmalate dehydrogenases family. LeuB type 1 subfamily. In terms of assembly, homodimer. Requires Mg(2+) as cofactor. Mn(2+) serves as cofactor.

The protein localises to the cytoplasm. It carries out the reaction (2R,3S)-3-isopropylmalate + NAD(+) = 4-methyl-2-oxopentanoate + CO2 + NADH. It functions in the pathway amino-acid biosynthesis; L-leucine biosynthesis; L-leucine from 3-methyl-2-oxobutanoate: step 3/4. In terms of biological role, catalyzes the oxidation of 3-carboxy-2-hydroxy-4-methylpentanoate (3-isopropylmalate) to 3-carboxy-4-methyl-2-oxopentanoate. The product decarboxylates to 4-methyl-2 oxopentanoate. This is 3-isopropylmalate dehydrogenase from Wolinella succinogenes (strain ATCC 29543 / DSM 1740 / CCUG 13145 / JCM 31913 / LMG 7466 / NCTC 11488 / FDC 602W) (Vibrio succinogenes).